A 646-amino-acid chain; its full sequence is Probable lysosomal cobalamin transporter (646 aa).

5 consecutive transmembrane segments (helical) span residues 11–31 (LIWV…VITT), 42–62 (IAVS…VFLL), 102–122 (TLYT…YFWF), 149–169 (LGFV…PAAG), and 193–213 (ALTF…ILYT). N-linked (GlcNAc...) asparagine glycosylation occurs at Asn-297. Helical transmembrane passes span 317-337 (LLGG…MLIT) and 380-400 (ILMA…LATI). Disordered stretches follow at residues 459-588 (QPAA…PPRR) and 603-623 (VGRA…DKKE). 2 stretches are compositionally biased toward low complexity: residues 460 to 490 (PAAA…SPAA) and 517 to 543 (PSTS…RTPR). Asn-545 is a glycosylation site (N-linked (GlcNAc...) asparagine). Low complexity predominate over residues 565–582 (APAAALARPGAISPAAPR). Asn-626 carries an N-linked (GlcNAc...) asparagine glycan.

Belongs to the LIMR family. LMBRD1 subfamily.

The protein localises to the lysosome membrane. Functionally, probable lysosomal cobalamin transporter. Required to export cobalamin from lysosomes allowing its conversion to cofactors. The chain is Probable lysosomal cobalamin transporter from Chaetomium globosum (strain ATCC 6205 / CBS 148.51 / DSM 1962 / NBRC 6347 / NRRL 1970) (Soil fungus).